A 113-amino-acid chain; its full sequence is uncharacterized protein (113 aa).

The N-terminal stretch at 1 to 20 (MMKKSILAFLLLTSSAAALA) is a signal peptide.

This is an uncharacterized protein from Escherichia coli (strain K12).